The primary structure comprises 483 residues: Myocilin (483 aa).

The N-terminal stretch at 1-18 is a signal peptide; the sequence is MPTAQLLLLACLLWGLEA. An N-linked (GlcNAc...) asparagine glycan is attached at asparagine 43. Residues 51 to 162 adopt a coiled-coil conformation; it reads GQAMSAIQDL…SQEVARLRRG (112 aa). The interval 153-179 is disordered; sequence SQEVARLRRGQCPQAHSSSQDVPAGSR. The Olfactomedin-like domain occupies 223 to 482; the sequence is GCGELVWVGE…MVTYDIRLSK (260 aa). A disulfide bridge connects residues cysteine 224 and cysteine 412. Positions 359, 407, 408, 456, and 457 each coordinate Ca(2+). Residues 481-483 carry the Microbody targeting signal motif; sequence SKM.

In terms of assembly, homodimer (via N-terminus). Can also form higher oligomers. Interacts with OLFM3, FN1, NRCAM, GLDN and NFASC. Interacts (via N-terminus) with MYL2. Interacts with SFRP1, FRZB, FZD7, FZD10, FZD1 and WIF1; regulates Wnt signaling. Interacts with SNTA1; regulates muscle hypertrophy. Interacts with ERBB2 and ERBB3; activates ERBB2-ERBB3 signaling pathway. Interacts with SNCG; affects its secretion and its aggregation. Post-translationally, N-glycosylated. In terms of processing, palmitoylated. Undergoes a calcium-dependent proteolytic cleavage at Arg-205 by CAPN2 in the endoplasmic reticulum. The result is the production of two fragments, one of 35 kDa containing the C-terminal olfactomedin-like domain, and another of 20 kDa containing the N-terminal leucine zipper-like domain. In terms of tissue distribution, expressed in optic nerve head, ciliary body and retina.

It localises to the secreted. The protein localises to the golgi apparatus. It is found in the cytoplasmic vesicle. Its subcellular location is the extracellular space. The protein resides in the extracellular matrix. It localises to the extracellular exosome. The protein localises to the mitochondrion. It is found in the mitochondrion intermembrane space. Its subcellular location is the mitochondrion inner membrane. The protein resides in the mitochondrion outer membrane. It localises to the rough endoplasmic reticulum. The protein localises to the cell projection. It is found in the cilium. Its subcellular location is the endoplasmic reticulum. Secreted glycoprotein regulating the activation of different signaling pathways in adjacent cells to control different processes including cell adhesion, cell-matrix adhesion, cytoskeleton organization and cell migration. Promotes substrate adhesion, spreading and formation of focal contacts. Negatively regulates cell-matrix adhesion and stress fiber assembly through Rho protein signal transduction. Modulates the organization of actin cytoskeleton by stimulating the formation of stress fibers through interactions with components of Wnt signaling pathways. Promotes cell migration through activation of PTK2 and the downstream phosphatidylinositol 3-kinase signaling. Plays a role in bone formation and promotes osteoblast differentiation in a dose-dependent manner through mitogen-activated protein kinase signaling. Mediates myelination in the peripheral nervous system through ERBB2/ERBB3 signaling. Plays a role as a regulator of muscle hypertrophy through the components of dystrophin-associated protein complex. Involved in positive regulation of mitochondrial depolarization. Plays a role in neurite outgrowth. May participate in the obstruction of fluid outflow in the trabecular meshwork. The polypeptide is Myocilin (MYOC) (Canis lupus familiaris (Dog)).